The chain runs to 248 residues: UPF0736 protein Bcer98_0893 (248 aa).

Belongs to the UPF0736 family.

In Bacillus cytotoxicus (strain DSM 22905 / CIP 110041 / 391-98 / NVH 391-98), this protein is UPF0736 protein Bcer98_0893.